A 1458-amino-acid chain; its full sequence is Secretory phospholipase A2 receptor (1458 aa).

A signal peptide spans Met-1–Ala-23. Residues Ala-24 to Ser-1393 are Extracellular-facing. 17 disulfide bridges follow: Cys-49/Cys-62, Cys-87/Cys-104, Cys-176/Cys-202, Cys-190/Cys-217, Cys-258/Cys-352, Cys-328/Cys-344, Cys-404/Cys-499, Cys-476/Cys-491, Cys-615/Cys-632, Cys-697/Cys-794, Cys-772/Cys-786, Cys-838/Cys-935, Cys-912/Cys-927, Cys-1065/Cys-1085, Cys-1207/Cys-1221, Cys-1278/Cys-1373, and Cys-1350/Cys-1365. In terms of domain architecture, Ricin B-type lectin spans Cys-49 to Trp-113. Asn-91 carries an N-linked (GlcNAc...) asparagine glycan. Positions Ala-171–Asp-219 constitute a Fibronectin type-II domain. C-type lectin domains lie at Cys-227 to Leu-356, Thr-374 to Pro-502, Ser-511 to Val-645, His-660 to Arg-798, Leu-815 to Thr-939, Gly-954 to Gln-1098, Leu-1117 to His-1231, and Glu-1243 to Lys-1376. Residues Asn-408, Asn-431, and Asn-452 are each glycosylated (N-linked (GlcNAc...) asparagine). A helical transmembrane segment spans residues Ile-1394–Ile-1416. At Tyr-1417–Asp-1458 the chain is on the cytoplasmic side. Residues Asn-1432–Thr-1438 carry the Endocytosis signal motif.

As to quaternary structure, interacts with sPLA2-IB/PLA2G1B; this interaction mediates intracellular signaling as well as clearance of extracellular sPLA2-IB/PLA2G1B via endocytotic pathway. Interacts with sPLA2-X/PLA2G10; this interaction mediates sPLA2-X/PLA2G10 clearance and inactivation. In terms of processing, the secretory phospholipase A2 receptor form may be produced by the action of metalloproteinases. It contains all extracellular domains and only lacks transmembrane and cytosolic regions. It is however unclear whether this form is produced by proteolytic cleavage as suggested by some experiments, or by alternative splicing. In terms of tissue distribution, lung, skeletal muscle, brain, kidney and heart.

It localises to the cell membrane. Its subcellular location is the secreted. Its function is as follows. Receptor for secretory phospholipase A2 (sPLA2). Also able to bind to snake PA2-like toxins. Although its precise function remains unclear, binding of sPLA2 to its receptor participates in both positive and negative regulation of sPLA2 functions as well as clearance of sPLA2. Binding of sPLA2-IB/PLA2G1B induces various effects depending on the cell type, such as activation of the mitogen-activated protein kinase (MAPK) cascade to induce cell proliferation, the production of lipid mediators, selective release of arachidonic acid in bone marrow-derived mast cells. In neutrophils, binding of sPLA2-IB/PLA2G1B can activate p38 MAPK to stimulate elastase release and cell adhesion. May be involved in responses in pro-inflammatory cytokine productions during endotoxic shock. Also has endocytic properties and rapidly internalizes sPLA2 ligands, which is particularly important for the clearance of extracellular sPLA2s to protect their potent enzymatic activities. The soluble secretory phospholipase A2 receptor form is circulating and acts as a negative regulator of sPLA2 functions by blocking the biological functions of sPLA2-IB/PLA2G1B and sPLA2-X/PLA2G10. The protein is Secretory phospholipase A2 receptor (PLA2R1) of Oryctolagus cuniculus (Rabbit).